The following is a 345-amino-acid chain: Probable G-protein coupled receptor 139 (345 aa).

The Extracellular segment spans residues 1-21 (MEHTHAHLAANSSACGLGFVP). The N-linked (GlcNAc...) asparagine glycan is linked to Asn-11. The helical transmembrane segment at 22 to 42 (VVYYSFLLCLGLPANILTVII) threads the bilayer. Topologically, residues 43–57 (LSQLVARRQKSSYNY) are cytoplasmic. Residues 58–78 (LLALAAADILVLFFIVFVDFL) traverse the membrane as a helical segment. The Extracellular portion of the chain corresponds to 79–94 (LEDFILTMQMPLIPDK). A helical transmembrane segment spans residues 95 to 115 (IIEVLEFSSIHTSIWITVPLT). Topologically, residues 116 to 140 (VDRYIAVCHPLKYHTVSYPARTRKV) are cytoplasmic. A helical transmembrane segment spans residues 141 to 161 (ILSVYITCFLTSIPYYWWPNI). At 162–173 (WTEDYISTSMHH) the chain is on the extracellular side. Residues 174 to 194 (VLVWIHCFTVYLVPCSIFFIL) traverse the membrane as a helical segment. Residues 195 to 220 (NSIIVYKLRRKSNFRLRGYSTGKTTA) are Cytoplasmic-facing. Residues 221-241 (ILFTITSIFATLWAPRIIMIL) form a helical membrane-spanning segment. At 242 to 260 (YHLYGAPIQNPWLVHIMLD) the chain is on the extracellular side. Residues 261-281 (VANMLALLNTAINFFLYCFIS) traverse the membrane as a helical segment. Topologically, residues 282–345 (KRFRTMAAAT…KHGKPIKVSP (64 aa)) are cytoplasmic.

Belongs to the G-protein coupled receptor 1 family. Expressed almost exclusively in the brain. Abundantly expressed in the ventrolateral region of caudate putamen, the habenular nucleus, the zona incerta, and the medial mammillary nucleus.

Its subcellular location is the cell membrane. Functionally, orphan receptor. Seems to act through a G(q/11)-mediated pathway. The sequence is that of Probable G-protein coupled receptor 139 (Gpr139) from Mus musculus (Mouse).